A 91-amino-acid chain; its full sequence is DNA-directed RNA polymerase subunit omega (91 aa).

This sequence belongs to the RNA polymerase subunit omega family. The RNAP catalytic core consists of 2 alpha, 1 beta, 1 beta' and 1 omega subunit. When a sigma factor is associated with the core the holoenzyme is formed, which can initiate transcription.

The catalysed reaction is RNA(n) + a ribonucleoside 5'-triphosphate = RNA(n+1) + diphosphate. Functionally, promotes RNA polymerase assembly. Latches the N- and C-terminal regions of the beta' subunit thereby facilitating its interaction with the beta and alpha subunits. In Yersinia enterocolitica serotype O:8 / biotype 1B (strain NCTC 13174 / 8081), this protein is DNA-directed RNA polymerase subunit omega.